The primary structure comprises 491 residues: MDTSSSLLFFSFFFFIIIVIFNKINGLRSSPASKKKLNDHHVTSQSHGPKFPHGSLGWPVIGETIEFVSSAYSDRPESFMDKRRLMYGRVFKSHIFGTATIVSTDAEVNRAVLQSDSTAFVPFYPKTVRELMGKSSILLINGSLHRRFHGLVGSFLKSPLLKAQIVRDMHKFLSESMDLWSEDQPVLLQDVSKTVAFKVLAKALISVEKGEDLEELKREFENFISGLMSLPINFPGTQLHRSLQAKKNMVKQVERIIEGKIRKTKNKEEDDVIAKDVVDVLLKDSSEHLTHNLIANNMIDMMIPGHDSVPVLITLAVKFLSDSPAALNLLTEENMKLKSLKELTGEPLYWNDYLSLPFTQKVITETLRMGNVIIGVMRKAMKDVEIKGYVIPKGWCFLAYLRSVHLDKLYYESPYKFNPWRWQERDMNTSSFSPFGGGQRLCPGLDLARLETSVFLHHLVTRFRWIAEEDTIINFPTVHMKNKLPIWIKRI.

Residues 7–27 (LLFFSFFFFIIIVIFNKINGL) traverse the membrane as a helical segment. Cysteine 442 serves as a coordination point for heme.

The protein belongs to the cytochrome P450 family. Requires heme as cofactor. As to expression, expressed in leaf vascular tissue.

The protein localises to the endoplasmic reticulum membrane. The enzyme catalyses 3-epi-6-deoxocathasterone + reduced [NADPH--hemoprotein reductase] + O2 = 6-deoxotyphasterol + oxidized [NADPH--hemoprotein reductase] + H2O + H(+). It catalyses the reaction (22S,24R)-22-hydroxy-5alpha-ergostan-3-one + reduced [NADPH--hemoprotein reductase] + O2 = 3-dehydro-6-deoxoteasterone + oxidized [NADPH--hemoprotein reductase] + H2O + H(+). It participates in plant hormone biosynthesis; brassinosteroid biosynthesis. Its function is as follows. Involved in brassinosteroid (BR) biosynthesis. May convert teasterone (TE) to 3-dehydroteasterone (3DT, 3-DHT), or 6-deoxoteasterone (6-deoxoTE) to 3-dehydro-6-deoxoteasterone (6-deoxo3DT, 6-deoxo3DHT). C-23 hydroxylase that converts directly (22S,24R)-22-hydroxy-5-alpha-ergostan-3-one and 3-epi-6-deoxocathasterone to 3-dehydro-6-deoxoteasterone (6-deoxo3DT, 6-deoxo3DHT) and 6-deoxotyphasterol (6-deoxoTY), respectively. These C-23 hydroxylation shortcuts bypass campestanol, 6-deoxocathasterone, and 6-deoxoteasterone (6-deoxoTE). Also catalyzes the conversion of cathasterone to teasterone (TE), 6-deoxotyphasterol (6-deoxoTY) to 6-deoxocathasterone (6-deoxoCT), (22S,24R)-22-hydroxyergost-4-en-3-one (22-OH-4-en-3-one) to (22R,23R)-22,23-dihydroxy-campest-4-en-3-one (22,23-diOH-4-en-3-one) and (22S)-22-hydroxycampesterol (22-OHCR) to (22R,23R)-22,23-dihydroxycampesterol (22,23-diOHCR). The protein is 3-epi-6-deoxocathasterone 23-monooxygenase CYP90D1 of Arabidopsis thaliana (Mouse-ear cress).